A 98-amino-acid polypeptide reads, in one-letter code: Small ribosomal subunit protein bS20 (98 aa).

The protein belongs to the bacterial ribosomal protein bS20 family.

Functionally, binds directly to 16S ribosomal RNA. The chain is Small ribosomal subunit protein bS20 from Prochlorococcus marinus (strain NATL1A).